A 98-amino-acid chain; its full sequence is Bombyxin A-3 homolog (98 aa).

Residues 1-18 form the signal peptide; it reads MRTQVLFLVLEVAAMASG. Cystine bridges form between cysteine 26–cysteine 85, cysteine 38–cysteine 98, and cysteine 84–cysteine 89. The propeptide at 47-75 is c peptide like; sequence TPYTSSESEGYGWRWLAPQRARQLAGARG.

Belongs to the insulin family. Heterodimer of a B chain and an A chain linked by two disulfide bonds.

It localises to the secreted. Functionally, brain peptide responsible for activation of prothoracic glands to produce ecdysone in insects. The sequence is that of Bombyxin A-3 homolog (SBXA3) from Samia cynthia (Ailanthus silkmoth).